Consider the following 175-residue polypeptide: Inosine/xanthosine triphosphatase (175 aa).

Substrate is bound at residue 8–13 (TTNPAK). E38 and E68 together coordinate Mg(2+). 68-69 (EA) provides a ligand contact to substrate.

This sequence belongs to the YjjX NTPase family. Homodimer. Mg(2+) serves as cofactor. Mn(2+) is required as a cofactor.

The catalysed reaction is XTP + H2O = XDP + phosphate + H(+). It carries out the reaction ITP + H2O = IDP + phosphate + H(+). Phosphatase that hydrolyzes non-canonical purine nucleotides such as XTP and ITP to their respective diphosphate derivatives. Probably excludes non-canonical purines from DNA/RNA precursor pool, thus preventing their incorporation into DNA/RNA and avoiding chromosomal lesions. The sequence is that of Inosine/xanthosine triphosphatase (yjjX) from Escherichia coli O127:H6 (strain E2348/69 / EPEC).